A 681-amino-acid polypeptide reads, in one-letter code: Transcriptional regulator prz1 (681 aa).

Over residues 1–15 (MERQRSEEANRRFKD) the composition is skewed to basic and acidic residues. 5 disordered regions span residues 1 to 29 (MERQ…SKPD), 66 to 96 (NPSK…DSYP), 340 to 372 (SHQS…NSPF), 410 to 433 (PQIN…ANPL), and 520 to 563 (KIEN…AKSE). Composition is skewed to polar residues over residues 66–86 (NPSK…FKTS) and 340–358 (SHQS…LNSE). A compositionally biased stretch (low complexity) spans 416-428 (PSSPSKSQSGPSL). Positions 528–549 (SNDYLSVRNTRPRSRSLNSLVG) are enriched in polar residues. A phosphoserine mark is found at Ser543 and Ser546. Over residues 550-559 (NKSENSSSSK) the composition is skewed to low complexity. C2H2-type zinc fingers lie at residues 570-594 (YVCT…MNTH) and 600-622 (FQCS…EQLH). Residues 628 to 650 (FACVTCNQRFARMDALNRHYKSE) form a C2H2-type 3; degenerate zinc finger. Positions 662-681 (RGIQVPPSRKTAVASTSKQK) are disordered.

This sequence belongs to the EGR C2H2-type zinc-finger protein family. Phosphorylated. Dephosphorylated by calcineurin which leads to rapid translocation from the cytoplasm to the nucleus.

Its subcellular location is the nucleus. It is found in the cytoplasm. Involved in the regulation of calcium ion homeostasis. Binds to the calcineurin-dependent response element. Transcriptionally regulates pmc1. The sequence is that of Transcriptional regulator prz1 (prz1) from Schizosaccharomyces pombe (strain 972 / ATCC 24843) (Fission yeast).